The following is a 62-amino-acid chain: Large ribosomal subunit protein bL28 (62 aa).

It belongs to the bacterial ribosomal protein bL28 family.

This Acetivibrio thermocellus (strain ATCC 27405 / DSM 1237 / JCM 9322 / NBRC 103400 / NCIMB 10682 / NRRL B-4536 / VPI 7372) (Clostridium thermocellum) protein is Large ribosomal subunit protein bL28.